Consider the following 595-residue polypeptide: Actin-histidine N-methyltransferase (595 aa).

Residues 1–22 (MGKKSRVKTQKSGTGATATVSP) are disordered. Over residues 10–20 (QKSGTGATATV) the composition is skewed to polar residues. Residues Arg-75, 104–106 (EGF), Arg-254, 275–279 (DMCNH), and 325–327 (SGF) each bind S-adenosyl-L-methionine. One can recognise an SET domain in the interval 94–314 (EGFEMVNFKE…AGEQIYIFYG (221 aa)). Ser-513 carries the post-translational modification Phosphoserine. Over residues 549–563 (ENGLVNGENSIPNGT) the composition is skewed to polar residues. The tract at residues 549–595 (ENGLVNGENSIPNGTRSEDENLNQEESKRAVEDAKGSSSDRADAVKE) is disordered. Residues 573–595 (EESKRAVEDAKGSSSDRADAVKE) show a composition bias toward basic and acidic residues.

Belongs to the class V-like SAM-binding methyltransferase superfamily. SETD3 actin-histidine methyltransferase family. As to quaternary structure, interacts with MYOD1. Phosphorylated by GSK3B, which is required for recognition by the SCF(FBXW7) complex and subsequent degradation. In terms of processing, ubiquitinated by the SCF(FBXW7) complex following phosphorylation by GSK3B, leading to its degradation by the proteasome.

The protein resides in the cytoplasm. The protein localises to the nucleus. It carries out the reaction L-histidyl-[protein] + S-adenosyl-L-methionine = N(tele)-methyl-L-histidyl-[protein] + S-adenosyl-L-homocysteine + H(+). Functionally, protein-histidine N-methyltransferase that specifically mediates 3-methylhistidine (tele-methylhistidine) methylation of actin at 'His-73'. Histidine methylation of actin is required for smooth muscle contraction of the laboring uterus during delivery. Does not have protein-lysine N-methyltransferase activity and probably only catalyzes histidine methylation of actin. This Callithrix jacchus (White-tufted-ear marmoset) protein is Actin-histidine N-methyltransferase.